The sequence spans 161 residues: Putative pre-16S rRNA nuclease (161 aa).

Positions 141 to 161 (AAGSPPGALVPRNRVDPDRHA) are disordered.

This sequence belongs to the YqgF nuclease family.

Its subcellular location is the cytoplasm. Could be a nuclease involved in processing of the 5'-end of pre-16S rRNA. This Clavibacter michiganensis subsp. michiganensis (strain NCPPB 382) protein is Putative pre-16S rRNA nuclease.